The sequence spans 300 residues: Probable alpha-L-glutamate ligase (300 aa).

Positions 104 to 287 constitute an ATP-grasp domain; that stretch reads LQLLARQGID…IAGKMISWIE (184 aa). ATP is bound by residues Lys-141, 178–179, Asp-187, and 211–213; these read EY and RSN. Residues Asp-248, Glu-260, and Asn-262 each contribute to the Mg(2+) site. Asp-248, Glu-260, and Asn-262 together coordinate Mn(2+).

Belongs to the RimK family. Mg(2+) is required as a cofactor. Requires Mn(2+) as cofactor.

The chain is Probable alpha-L-glutamate ligase from Enterobacter sp. (strain 638).